The following is a 120-amino-acid chain: Small ribosomal subunit protein uS13 (120 aa).

The segment at 92-120 (HRKGLPVRGQTTKNNARTRKGKKKTVGSK) is disordered. Basic residues predominate over residues 107 to 120 (ARTRKGKKKTVGSK).

Belongs to the universal ribosomal protein uS13 family. Part of the 30S ribosomal subunit. Forms a loose heterodimer with protein S19. Forms two bridges to the 50S subunit in the 70S ribosome.

Located at the top of the head of the 30S subunit, it contacts several helices of the 16S rRNA. In the 70S ribosome it contacts the 23S rRNA (bridge B1a) and protein L5 of the 50S subunit (bridge B1b), connecting the 2 subunits; these bridges are implicated in subunit movement. Contacts the tRNAs in the A and P-sites. This chain is Small ribosomal subunit protein uS13, found in Helicobacter hepaticus (strain ATCC 51449 / 3B1).